The following is a 623-amino-acid chain: MDFKYDVIVIGAGHAGCEAAAAAANMGSKTCLITMDMNKIGQMSCNPAVGGIAKGQIVREIDALGGYMGLVTDRTAIQFRMLNRSKGPAMWSPRAQCDRGKFIWAWREILENTPNLHIWQDTVEELIVENGEATGVMTCWGVTFHAKCIVLTAGTFLNGLMHIGHKQLAGGRMAEPASYHLTESITRHGITAGRMKTGTPVRIDGRSVHYDLMETQDGENDFHRFSFMSEPRKLKQLQCWTCFTNEEVHEILRKGLPDSPLFNGQIQSIGPRYCPSIETKIVTFPDKPQHQLFLEPEGETTQELYLNGFSSSLPMDIQLAALKKVPAFKDLVVYRPGYAIEYDYFDPTQLKHTLESKIIKNLFLAGQVNGTTGYEEAGGQGIIAGINAHINCHGGEPFTLGRDEAYIGVLIDDLVTKGVDEPYRMFTSRAEYRILLRQDDADMRLTERAYKLGLVKQDRYEHLCSKREAVNQIIDFAKTFSIKAALINDALESLGTARLTHGCKLIDLLNRPQITIENIAGHIPAFKAMLDQITDRKEEVIEAAEVLIKYQGYIDRERMIADKIHRLEAIRIKGKFDYNSLNSLSTEARQKLMKIDPETLAQASRIPGISPSDINVLLVLLGR.

FAD is bound by residues 11–16 (GAGHAG), Val-123, and Ser-178. 270-284 (GPRYCPSIETKIVTF) provides a ligand contact to NAD(+). Gln-367 contacts FAD.

This sequence belongs to the MnmG family. As to quaternary structure, homodimer. Heterotetramer of two MnmE and two MnmG subunits. FAD is required as a cofactor.

Its subcellular location is the cytoplasm. In terms of biological role, NAD-binding protein involved in the addition of a carboxymethylaminomethyl (cmnm) group at the wobble position (U34) of certain tRNAs, forming tRNA-cmnm(5)s(2)U34. The sequence is that of tRNA uridine 5-carboxymethylaminomethyl modification enzyme MnmG from Phocaeicola vulgatus (strain ATCC 8482 / DSM 1447 / JCM 5826 / CCUG 4940 / NBRC 14291 / NCTC 11154) (Bacteroides vulgatus).